A 431-amino-acid polypeptide reads, in one-letter code: uncharacterized protein (431 aa).

2 helical membrane-spanning segments follow: residues 42 to 62 (LLIG…IGCL) and 74 to 94 (VMIF…ATML). The N-linked (GlcNAc...) asparagine; by host glycan is linked to N105. 5 consecutive transmembrane segments (helical) span residues 111 to 131 (LVLF…LFLI), 153 to 173 (AGVA…AAVP), 202 to 222 (MWFL…ELAY), 236 to 256 (VCTF…FRVL), and 279 to 299 (ATRT…IAFF).

The protein resides in the membrane. This is an uncharacterized protein from Homo sapiens (Human).